A 221-amino-acid chain; its full sequence is Probable septum site-determining protein MinC (221 aa).

Belongs to the MinC family. Interacts with MinD and FtsZ.

In terms of biological role, cell division inhibitor that blocks the formation of polar Z ring septums. Rapidly oscillates between the poles of the cell to destabilize FtsZ filaments that have formed before they mature into polar Z rings. Prevents FtsZ polymerization. The protein is Probable septum site-determining protein MinC of Shewanella denitrificans (strain OS217 / ATCC BAA-1090 / DSM 15013).